Here is a 281-residue protein sequence, read N- to C-terminus: N-acetylmuramic acid 6-phosphate etherase (281 aa).

An SIS domain is found at 63–226; it reads IVPRMKQGGR…TTSVMIQLGR (164 aa). Residue glutamate 91 is the Proton donor of the active site. Glutamate 122 is an active-site residue.

This sequence belongs to the GCKR-like family. MurNAc-6-P etherase subfamily. Homodimer.

It carries out the reaction N-acetyl-D-muramate 6-phosphate + H2O = N-acetyl-D-glucosamine 6-phosphate + (R)-lactate. It participates in amino-sugar metabolism; N-acetylmuramate degradation. Functionally, specifically catalyzes the cleavage of the D-lactyl ether substituent of MurNAc 6-phosphate, producing GlcNAc 6-phosphate and D-lactate. The sequence is that of N-acetylmuramic acid 6-phosphate etherase from Bacteroides fragilis (strain YCH46).